The following is a 159-amino-acid chain: Phosphopantetheine adenylyltransferase (159 aa).

T10 contributes to the substrate binding site. Residues 10–11 (TF) and H18 contribute to the ATP site. Residues K42, M74, and R88 each coordinate substrate. ATP contacts are provided by residues 89 to 91 (GLR), E99, and 124 to 130 (WSFISSS).

The protein belongs to the bacterial CoaD family. As to quaternary structure, homohexamer. Mg(2+) is required as a cofactor.

The protein localises to the cytoplasm. It catalyses the reaction (R)-4'-phosphopantetheine + ATP + H(+) = 3'-dephospho-CoA + diphosphate. It functions in the pathway cofactor biosynthesis; coenzyme A biosynthesis; CoA from (R)-pantothenate: step 4/5. In terms of biological role, reversibly transfers an adenylyl group from ATP to 4'-phosphopantetheine, yielding dephospho-CoA (dPCoA) and pyrophosphate. The protein is Phosphopantetheine adenylyltransferase of Escherichia coli (strain SMS-3-5 / SECEC).